Consider the following 219-residue polypeptide: Probable GTP-binding protein EngB (219 aa).

The region spanning 31 to 205 (VGVEIAFAGR…LSILNEWCHP (175 aa)) is the EngB-type G domain. GTP contacts are provided by residues 39–46 (GRSNAGKS), 66–70 (GRTQL), 84–87 (DLPG), 151–154 (TKSD), and 184–186 (FSA). Residues Ser46 and Thr68 each contribute to the Mg(2+) site.

Belongs to the TRAFAC class TrmE-Era-EngA-EngB-Septin-like GTPase superfamily. EngB GTPase family. Mg(2+) serves as cofactor.

In terms of biological role, necessary for normal cell division and for the maintenance of normal septation. The polypeptide is Probable GTP-binding protein EngB (Shewanella sp. (strain W3-18-1)).